A 179-amino-acid chain; its full sequence is Cytochrome b6-f complex iron-sulfur subunit (179 aa).

Residues 21-43 (LLTFGSATGVALGMLYPVVRYFI) traverse the membrane as a helical segment. The Rieske domain occupies 61-162 (GNDISVSDFL…AAVSDDKITF (102 aa)). 4 residues coordinate [2Fe-2S] cluster: cysteine 108, histidine 110, cysteine 126, and histidine 129. Cysteine 113 and cysteine 128 are disulfide-bonded.

Belongs to the Rieske iron-sulfur protein family. The 4 large subunits of the cytochrome b6-f complex are cytochrome b6, subunit IV (17 kDa polypeptide, PetD), cytochrome f and the Rieske protein, while the 4 small subunits are PetG, PetL, PetM and PetN. The complex functions as a dimer. [2Fe-2S] cluster serves as cofactor.

It is found in the cellular thylakoid membrane. The catalysed reaction is 2 oxidized [plastocyanin] + a plastoquinol + 2 H(+)(in) = 2 reduced [plastocyanin] + a plastoquinone + 4 H(+)(out). Component of the cytochrome b6-f complex, which mediates electron transfer between photosystem II (PSII) and photosystem I (PSI), cyclic electron flow around PSI, and state transitions. This Cyanothece sp. (strain PCC 7425 / ATCC 29141) protein is Cytochrome b6-f complex iron-sulfur subunit.